The sequence spans 151 residues: Deoxyuridine 5'-triphosphate nucleotidohydrolase (151 aa).

Residues 70–72, Asn-83, 87–89, and Met-97 contribute to the substrate site; these read RSG and LID.

The protein belongs to the dUTPase family. Requires Mg(2+) as cofactor.

The enzyme catalyses dUTP + H2O = dUMP + diphosphate + H(+). It participates in pyrimidine metabolism; dUMP biosynthesis; dUMP from dCTP (dUTP route): step 2/2. This enzyme is involved in nucleotide metabolism: it produces dUMP, the immediate precursor of thymidine nucleotides and it decreases the intracellular concentration of dUTP so that uracil cannot be incorporated into DNA. The sequence is that of Deoxyuridine 5'-triphosphate nucleotidohydrolase from Actinobacillus pleuropneumoniae serotype 5b (strain L20).